The primary structure comprises 20 residues: Protein PR-L3 (20 aa).

The protein belongs to the BetVI family.

The chain is Protein PR-L3 from Lupinus luteus (European yellow lupine).